We begin with the raw amino-acid sequence, 717 residues long: Polyribonucleotide nucleotidyltransferase (717 aa).

Residues D496 and D502 each coordinate Mg(2+). One can recognise a KH domain in the interval 563–622 (PRLLSFKIDPEMIGLVIGPGGKTIKGITEETGVKIDIDDDGTVTIAAADGEKAKQACNII). In terms of domain architecture, S1 motif spans 632 to 700 (GDVYVGRVTR…SKGRVNLTRL (69 aa)).

Belongs to the polyribonucleotide nucleotidyltransferase family. Requires Mg(2+) as cofactor.

It is found in the cytoplasm. The enzyme catalyses RNA(n+1) + phosphate = RNA(n) + a ribonucleoside 5'-diphosphate. Involved in mRNA degradation. Catalyzes the phosphorolysis of single-stranded polyribonucleotides processively in the 3'- to 5'-direction. This chain is Polyribonucleotide nucleotidyltransferase, found in Trichodesmium erythraeum (strain IMS101).